The sequence spans 168 residues: MLDLFNKTSQVQGRISAWLASNNLPHRPLGFDYQGVETLQIKPEDWPSIAVALYVNGFNYLRCQCGYDVYPGGPLASVYYLTKVDDNVDQPEEVCIKIFVPRENPKIPSIFWVWKTADYQERETYDMLGIVYESHPNLKRILMPESWLGWPLRKDYITPDFYELQDAY.

The protein belongs to the complex I 30 kDa subunit family. NDH is composed of at least 16 different subunits, 5 of which are encoded in the nucleus.

The protein resides in the plastid. It is found in the chloroplast thylakoid membrane. It carries out the reaction a plastoquinone + NADH + (n+1) H(+)(in) = a plastoquinol + NAD(+) + n H(+)(out). It catalyses the reaction a plastoquinone + NADPH + (n+1) H(+)(in) = a plastoquinol + NADP(+) + n H(+)(out). In terms of biological role, NDH shuttles electrons from NAD(P)H:plastoquinone, via FMN and iron-sulfur (Fe-S) centers, to quinones in the photosynthetic chain and possibly in a chloroplast respiratory chain. The immediate electron acceptor for the enzyme in this species is believed to be plastoquinone. Couples the redox reaction to proton translocation, and thus conserves the redox energy in a proton gradient. In Chaetosphaeridium globosum (Charophycean green alga), this protein is NAD(P)H-quinone oxidoreductase subunit J, chloroplastic.